The chain runs to 241 residues: MLIEHERGFVLHARAWRETSLLVEVLTEQHGRVGLLARGVHGPRKQALRAALQPLQLIQFTAVQRGELAQLRQAEAIDTAPRLLGEAMLAGFYISELLLRLAPRHAPVPELFDCYAQARAHLASGAALAWGLRQFERDVLDGLGFGFDLQHDSDGQPIDPAARYRLDPQDGARRVLSERLAQDRRETVTGAALLALGEDRVPATEDMPGLRRSMRGVLLHHLSGRGLKSWEMLEELARRGA.

The protein belongs to the RecO family.

Involved in DNA repair and RecF pathway recombination. In Xanthomonas campestris pv. campestris (strain B100), this protein is DNA repair protein RecO.